A 355-amino-acid chain; its full sequence is MDRVASQIYSGALPYITTMDMEDRLRNRIAAKAGAKFFKACFEAVVADKSGLFVLSGGAATACHIGDDRNVLKCLDFDYYNATQEWLQLARLQQRLQACVQDNLEILSRLAQSVRMQDDLFVVKCFQNGAFCFNGPVQARLVPCVETVRTSFNGEFDLLRFALQVELKALNGVDEYVDQKVIVDRGAAVFNVFFVNIRAMKGPLTMERCVRTLAVFGDAYRVVVSPLQSVINDQIMCLLKDIFTDKPEFRVARPKALICALFAKLPREAYDECINSHHGAEPTRRRDETVTSFCRRTLHIHGPALGCRKLVYAYFKTDSFARQMPDYVANRAIYPHTDCEMKWKEFIHFFVVAKV.

This protein is required for viral late gene expression. The polypeptide is Putative early 40.3 kDa protein (DA41) (Orgyia pseudotsugata multicapsid polyhedrosis virus (OpMNPV)).